We begin with the raw amino-acid sequence, 557 residues long: Protein Red (557 aa).

Positions 1-84 (MPERDSEPFS…RKKKSYYAKL (84 aa)) are disordered. Basic and acidic residues predominate over residues 16–25 (DGHDVDDPHS). The span at 42-53 (TPRAAPTSAPPS) shows a compositional bias: low complexity. N6-acetyllysine occurs at positions 98 and 137. A Glycyl lysine isopeptide (Lys-Gly) (interchain with G-Cter in SUMO2) cross-link involves residue Lys-151. The interval 181–205 (KEKEEEELMEKPQKETKKDEDPENK) is disordered. Phosphoserine is present on Ser-287. Residues 294 to 303 (RNKKLKKKDK) are compositionally biased toward basic residues. Residues 294–402 (RNKKLKKKDK…PIDVDKGPGS (109 aa)) are disordered. A compositionally biased stretch (basic and acidic residues) spans 304-313 (GKLEEKKPPE). Glycyl lysine isopeptide (Lys-Gly) (interchain with G-Cter in SUMO2) cross-links involve residues Lys-310 and Lys-331. A compositionally biased stretch (basic and acidic residues) spans 332–398 (TPRDKERERY…VDDEPIDVDK (67 aa)). 17 tandem repeats follow at residues 342–343 (RE), 344–345 (RE), 346–347 (RD), 348–349 (RE), 350–351 (RD), 352–353 (RD), 354–355 (RD), 356–357 (RE), 358–359 (RE), 360–361 (RE), 362–363 (RD), 364–365 (RE), 366–367 (RE), 368–369 (RE), 370–371 (RD), 372–373 (RE), and 374–375 (RE). Residues 342–375 (RERERDRERDRDRDRERERERDRERERERDRERE) form a 17 X 2 AA tandem repeats of R-[ED] region. Glycyl lysine isopeptide (Lys-Gly) (interchain with G-Cter in SUMO2) cross-links involve residues Lys-386, Lys-388, Lys-404, and Lys-408. Ser-417 and Ser-460 each carry phosphoserine. At Thr-485 the chain carries Phosphothreonine. Glycyl lysine isopeptide (Lys-Gly) (interchain with G-Cter in SUMO2) cross-links involve residues Lys-496, Lys-501, and Lys-509. Position 536 is a phosphoserine (Ser-536). Residues Lys-541, Lys-543, Lys-544, and Lys-553 each participate in a glycyl lysine isopeptide (Lys-Gly) (interchain with G-Cter in SUMO2) cross-link.

The protein belongs to the RED family. As to quaternary structure, component of the spliceosome B complex. Interacts with SMU1. Interacts with MAD1L1. May interact with DHX15.

The protein resides in the nucleus. It is found in the nucleoplasm. It localises to the chromosome. The protein localises to the cytoplasm. Its subcellular location is the cytoskeleton. The protein resides in the spindle pole. Functionally, involved in pre-mRNA splicing as a component of the spliceosome. Auxiliary spliceosomal protein that regulates selection of alternative splice sites in a small set of target pre-mRNA species. Required for normal mitotic cell cycle progression. Recruits MAD1L1 and MAD2L1 to kinetochores, and is required to trigger the spindle assembly checkpoint. Required for normal accumulation of SMU1. The chain is Protein Red (IK) from Pongo abelii (Sumatran orangutan).